Consider the following 551-residue polypeptide: Palmdelphin (551 aa).

Met1 carries the N-acetylmethionine modification. Residues 2 to 106 (EEAELVKERL…LQISTNEEAI (105 aa)) adopt a coiled-coil conformation. Residue Lys125 forms a Glycyl lysine isopeptide (Lys-Gly) (interchain with G-Cter in SUMO2) linkage. Phosphoserine is present on Ser135. Lys179 participates in a covalent cross-link: Glycyl lysine isopeptide (Lys-Gly) (interchain with G-Cter in SUMO1); alternate. Lys179 participates in a covalent cross-link: Glycyl lysine isopeptide (Lys-Gly) (interchain with G-Cter in SUMO2); alternate. Basic and acidic residues predominate over residues 247 to 259 (SERNSKSPTEYHD). Disordered stretches follow at residues 247-393 (SERN…EDEE) and 450-529 (EEEE…IAGD). Position 271 is a phosphothreonine (Thr271). A phosphoserine mark is found at Ser321, Ser370, Ser384, and Ser385. Residues 484 to 495 (KRAEVNPHENTN) show a composition bias toward basic and acidic residues. 3 positions are modified to phosphoserine: Ser498, Ser515, and Ser520.

This sequence belongs to the paralemmin family. In terms of assembly, interacts with GLUL. Cell projection, dendrite. Cell projection, dendritic spine. Post-translationally, phosphorylated.

It is found in the cytoplasm. The protein localises to the cell projection. It localises to the dendrite. The protein resides in the dendritic spine. The chain is Palmdelphin (PALMD) from Sus scrofa (Pig).